A 205-amino-acid chain; its full sequence is Small ribosomal subunit protein uS4 (205 aa).

Positions 20–44 (WGRPKSPVNRREYGPGQHGQRRKGK) are disordered. In terms of domain architecture, S4 RNA-binding spans 94–154 (SRLDAIVYRS…ERSKQLLLVL (61 aa)).

Belongs to the universal ribosomal protein uS4 family. As to quaternary structure, part of the 30S ribosomal subunit. Contacts protein S5. The interaction surface between S4 and S5 is involved in control of translational fidelity.

One of the primary rRNA binding proteins, it binds directly to 16S rRNA where it nucleates assembly of the body of the 30S subunit. Its function is as follows. With S5 and S12 plays an important role in translational accuracy. In Bartonella bacilliformis (strain ATCC 35685 / KC583 / Herrer 020/F12,63), this protein is Small ribosomal subunit protein uS4.